Consider the following 89-residue polypeptide: Aminoacyl carrier protein 2 (89 aa).

One can recognise a Carrier domain in the interval 6–84 (INVQNRVLSV…AMERMILNQL (79 aa)). Ser-42 carries the post-translational modification O-(pantetheine 4'-phosphoryl)serine.

Post-translationally, 4'-phosphopantetheine is transferred from CoA to a specific serine of the apo-form of this carrier protein.

Functionally, aminoacyl carrier protein. Can be charged with L-glycine via the formation of a thioester bond between the amino acid and the 4'-phosphopantetheinyl prosthetic group, catalyzed by the bll6282 ligase. This is Aminoacyl carrier protein 2 from Bradyrhizobium diazoefficiens (strain JCM 10833 / BCRC 13528 / IAM 13628 / NBRC 14792 / USDA 110).